Consider the following 493-residue polypeptide: MKILFVSSEVFPLMKTGGLADVSGSLPAALSALGHDVRILMPAYPEAISAAETPNALSLRQAGSQLTLLSTRLPGTTVPLWLLDAPASFGRFGNPYLAPNGAPWPDNAERFALLARVAVDLTQDRLGLGWKPDVVHCNDWQTGLIPPLLSDEPNRPAVVFTVHNLAYQGLFPYETFQRLALPPRLWKMEALEFYGQLSFIKGGLVFADRINTVSPSYAEEIQTPEFGCGLDGLLRSRKSCLSGILNGIDDVAWNPATDPYLPAPYGPDTLERKKVNRTVLRQRYGLPDDPEVAVLGMVGRMVEQKGVDLLIDILDDLLQLPVQLVVLGSGDKEFERCFERAAAARPERIAVTIGYDEPLAHLIEAGADIFLMPSRFEPCGLNQLYSQRYGTVPIVRKVGGLADTVEDATPERLAAGQASGIVFEPAKPAFLLEAVYRALALYREPEVWRAVCKCGMAKDFSWRKSASRYVGLYREALAGMNAGCSIADPRCAA.

Lysine 15 provides a ligand contact to ADP-alpha-D-glucose.

This sequence belongs to the glycosyltransferase 1 family. Bacterial/plant glycogen synthase subfamily.

The catalysed reaction is [(1-&gt;4)-alpha-D-glucosyl](n) + ADP-alpha-D-glucose = [(1-&gt;4)-alpha-D-glucosyl](n+1) + ADP + H(+). It functions in the pathway glycan biosynthesis; glycogen biosynthesis. Its function is as follows. Synthesizes alpha-1,4-glucan chains using ADP-glucose. The chain is Glycogen synthase 1 from Methylococcus capsulatus (strain ATCC 33009 / NCIMB 11132 / Bath).